Reading from the N-terminus, the 161-residue chain is MGRVTAPEPLSAFHQVAEFVSGEAVLDDWLKQKGLKNQALGAARTFVVCKKDTKQVAGFYSLATGSVNHTEATGNLRRNMPDPIPVIILARLAVDLSFHGKGLGADLLHDAVLRCYRVAENIGVRAIMVHALTEEAKNFYIHHGFKSSQTQQRTLFLRLPQ.

Positions 92, 94, 99, 100, 102, 104, 105, 132, and 135 each coordinate acetyl-CoA. Residue Tyr-140 is part of the active site. Residue His-142 participates in acetyl-CoA binding.

It belongs to the acetyltransferase family. GNAT subfamily. As to quaternary structure, homodimer (in absence of antitoxin). Forms a complex with cognate antitoxin TacA1. Forms a 4:2 antitoxin:toxin complex with cognate antitoxin TacA1.

It catalyses the reaction glycyl-tRNA(Gly) + acetyl-CoA = N-acetylglycyl-tRNA(Gly) + CoA + H(+). Functionally, toxic component of a type II toxin-antitoxin (TA) system. Acetylates tRNA and inhibits translation, does not acetylate uncharged tRNA. Upon expression in situ acetylates only Gly-tRNA(Gly). In vitro acetylates mainly Gly and Ile/Leu. Upon induction of the toxin gene in lag phase in rich medium (but not mid-exponential phase) the lag phase is extended by several hours, locking bacteria in a non-growth state. Neutralized only by cognate antitoxin TacA1 (A8), but not by TacA2 or TacA3. Its toxic effect is neutralized by expression of peptidyl-tRNA hydrolase (pth) in lag phase. NAD-dependent protein deacylase (cobB) also play a role in detoxifying TacT targets. Expression increases persister cell formation, which is also abolished by either cognate antitoxin or Pth expression. Plays a role in persister cell formation. In terms of biological role, the TacA1-TacT1 complex binds (and probably represses) its own promoter DNA but not that of tacA3-tacT3, it does not repress the tacA3-tacT3 promoter. The chain is tRNA-acetylating toxin 1 from Salmonella typhimurium (strain 14028s / SGSC 2262).